The sequence spans 195 residues: Erythropoietin (195 aa).

A signal peptide spans 1–28 (MGVRGRLALLPLALLCLLVLALGLPVLG). Cystine bridges form between C35-C190 and C57-C61. An N-linked (GlcNAc...) asparagine glycan is attached at N52. 2 N-linked (GlcNAc...) asparagine glycosylation sites follow: N66 and N111.

It belongs to the EPO/TPO family.

The protein localises to the secreted. Its function is as follows. Hormone involved in the regulation of erythrocyte proliferation and differentiation and the maintenance of a physiological level of circulating erythrocyte mass. Binds to EPOR leading to EPOR dimerization and JAK2 activation thereby activating specific downstream effectors, including STAT1 and STAT3. This is Erythropoietin (EPO) from Oryctolagus cuniculus (Rabbit).